We begin with the raw amino-acid sequence, 335 residues long: ATP-dependent 6-phosphofructokinase (335 aa).

Glycine 11 provides a ligand contact to ATP. 21 to 25 (RAVVR) is a binding site for ADP. ATP-binding positions include 72–73 (RY) and 102–105 (GDGS). Aspartate 103 is a Mg(2+) binding site. 125 to 127 (TID) contributes to the substrate binding site. Aspartate 127 acts as the Proton acceptor in catalysis. Arginine 154 lines the ADP pocket. Residues arginine 162 and 169-171 (MGR) contribute to the substrate site. Residues 185-187 (GAD) and 213-215 (KKH) contribute to the ADP site. Residues glutamate 222, arginine 244, and 250 to 253 (HIQR) each bind substrate.

This sequence belongs to the phosphofructokinase type A (PFKA) family. ATP-dependent PFK group I subfamily. Prokaryotic clade 'B1' sub-subfamily. Homotetramer. Requires Mg(2+) as cofactor.

Its subcellular location is the cytoplasm. The enzyme catalyses beta-D-fructose 6-phosphate + ATP = beta-D-fructose 1,6-bisphosphate + ADP + H(+). It functions in the pathway carbohydrate degradation; glycolysis; D-glyceraldehyde 3-phosphate and glycerone phosphate from D-glucose: step 3/4. Its activity is regulated as follows. Allosterically activated by ADP and other diphosphonucleosides, and allosterically inhibited by phosphoenolpyruvate. Catalyzes the phosphorylation of D-fructose 6-phosphate to fructose 1,6-bisphosphate by ATP, the first committing step of glycolysis. The chain is ATP-dependent 6-phosphofructokinase from Streptococcus pneumoniae (strain CGSP14).